Reading from the N-terminus, the 105-residue chain is uncharacterized protein (105 aa).

Positions 22–105 (GSAGHGATEA…KKRIIKGKVM (84 aa)) are disordered. Basic and acidic residues predominate over residues 61–83 (HDSRPARGDARKRHCQENNKTDR). Positions 93 to 105 (NRRKKRIIKGKVM) are enriched in basic residues.

This is an uncharacterized protein from Escherichia coli (strain K12).